A 311-amino-acid polypeptide reads, in one-letter code: tRNA pseudouridine synthase B (311 aa).

The active-site Nucleophile is D49.

This sequence belongs to the pseudouridine synthase TruB family. Type 1 subfamily.

The catalysed reaction is uridine(55) in tRNA = pseudouridine(55) in tRNA. Its function is as follows. Responsible for synthesis of pseudouridine from uracil-55 in the psi GC loop of transfer RNAs. In Actinobacillus succinogenes (strain ATCC 55618 / DSM 22257 / CCUG 43843 / 130Z), this protein is tRNA pseudouridine synthase B.